Here is a 72-residue protein sequence, read N- to C-terminus: Translation initiation factor IF-1 2 (72 aa).

Residues 1 to 72 enclose the S1-like domain; that stretch reads MAKEDVIEMQ…TKGRIVFRTK (72 aa).

It belongs to the IF-1 family. Component of the 30S ribosomal translation pre-initiation complex which assembles on the 30S ribosome in the order IF-2 and IF-3, IF-1 and N-formylmethionyl-tRNA(fMet); mRNA recruitment can occur at any time during PIC assembly.

The protein resides in the cytoplasm. One of the essential components for the initiation of protein synthesis. Stabilizes the binding of IF-2 and IF-3 on the 30S subunit to which N-formylmethionyl-tRNA(fMet) subsequently binds. Helps modulate mRNA selection, yielding the 30S pre-initiation complex (PIC). Upon addition of the 50S ribosomal subunit IF-1, IF-2 and IF-3 are released leaving the mature 70S translation initiation complex. The protein is Translation initiation factor IF-1 2 of Azoarcus sp. (strain BH72).